Reading from the N-terminus, the 400-residue chain is Argininosuccinate synthase (400 aa).

Residues A10 to S18 and A38 contribute to the ATP site. Y89 contacts L-citrulline. Residue G119 coordinates ATP. 3 residues coordinate L-aspartate: T121, N125, and D126. L-citrulline is bound at residue N125. Residues R129, S177, S186, E262, and Y274 each coordinate L-citrulline.

This sequence belongs to the argininosuccinate synthase family. Type 1 subfamily. As to quaternary structure, homotetramer.

It is found in the cytoplasm. It carries out the reaction L-citrulline + L-aspartate + ATP = 2-(N(omega)-L-arginino)succinate + AMP + diphosphate + H(+). The protein operates within amino-acid biosynthesis; L-arginine biosynthesis; L-arginine from L-ornithine and carbamoyl phosphate: step 2/3. With respect to regulation, activity decreases to 53.9% and 18.4% in the presence of 1 mM and 5 mM arginine, respectively. Activity also decreases to 80.1%, 78.1% and 92.1% in the presence of 5 mM ornithine, lysine and succinate, respectively. Activity does not decrease in the presence of glutamate, glutamine or asparagine. Catalyzes the condensation of citrulline and aspartate into argininosuccinate, the immediate precursor of arginine. SyArgG is the rate-limiting step in arginine biosynthesis in Synechocystis PCC 6803. This chain is Argininosuccinate synthase, found in Synechocystis sp. (strain ATCC 27184 / PCC 6803 / Kazusa).